A 156-amino-acid polypeptide reads, in one-letter code: Transcription elongation factor GreA (156 aa).

Residues 1–32 (MKKVRLTREGYEKLKKELEDLKRKFMYEISER) are a coiled coil.

This sequence belongs to the GreA/GreB family.

Necessary for efficient RNA polymerase transcription elongation past template-encoded arresting sites. The arresting sites in DNA have the property of trapping a certain fraction of elongating RNA polymerases that pass through, resulting in locked ternary complexes. Cleavage of the nascent transcript by cleavage factors such as GreA or GreB allows the resumption of elongation from the new 3'terminus. GreA releases sequences of 2 to 3 nucleotides. In Thermotoga sp. (strain RQ2), this protein is Transcription elongation factor GreA.